Reading from the N-terminus, the 968-residue chain is Polycystin-2 (968 aa).

Residues 1–11 (MVNSSRVQPQQ) show a composition bias toward polar residues. Disordered regions lie at residues 1-28 (MVNS…DPGR) and 58-181 (RIRQ…LPLE). The Cytoplasmic segment spans residues 1 to 219 (MVNSSRVQPQ…STNREKYLKS (219 aa)). Positions 62–83 (AAARDPPAGAAASPSPPLSSCS) are enriched in low complexity. 2 positions are modified to phosphoserine: S76 and S80. The segment covering 95–107 (EAEEEEEEVEGEE) has biased composition (acidic residues). The segment covering 123 to 139 (RRSAASSAVSSVGARSR) has biased composition (low complexity). R137 is subject to Omega-N-methylarginine. The chain crosses the membrane as a helical span at residues 220 to 241 (VLRELVTYLLFLIVLCILTYGM). Residues 242–468 (MSSNVYYYTR…PLKLIRYVTT (227 aa)) lie on the Extracellular side of the membrane. N-linked (GlcNAc...) asparagine glycans are attached at residues N299 and N305. A glycan (N-linked (GlcNAc...) (complex) asparagine) is linked at N328. C331 and C344 are oxidised to a cystine. N-linked (GlcNAc...) asparagine glycans are attached at residues N362 and N375. The chain crosses the membrane as a helical span at residues 469-489 (FDFFLAACEIIFCFFIFYYVV). Topologically, residues 490-505 (EEILEIRIHKLHYFRS) are cytoplasmic. Residues 506 to 526 (FWNCLDVVIVVLSVVAIGINI) traverse the membrane as a helical segment. Residues 527 to 552 (YRTSNVEVLLQFLEDQNTFPNFEHLA) are Extracellular-facing. Residues 553-573 (YWQIQFNNIAAVTVFFVWIKL) form a helical membrane-spanning segment. Q557 lines the cholesterol pocket. Residues 574-597 (FKFINFNRTMSQLSTTMSRCAKDL) lie on the Cytoplasmic side of the membrane. The chain crosses the membrane as a helical span at residues 598–619 (FGFAIMFFIIFLAYAQLAYLVF). Over 620–631 (GTQVDDFSTFQE) the chain is Extracellular. Residues 632-646 (CIFTQFRIILGDINF) constitute an intramembrane region (pore-forming). L641 serves as a coordination point for Ca(2+). The Selectivity filter signature appears at 641–643 (LGD). Over 647–654 (AEIEEANR) the chain is Extracellular. A helical transmembrane segment spans residues 655–675 (VLGPIYFTTFVFFMFFILLNM). Over 676-968 (FLAIINDTYS…GGNGSSNVHV (293 aa)) the chain is Cytoplasmic. Residues 750–785 (HTDAEIEAIFTKYDQDGDQELTEHEHQQMRDDLEKE) form the EF-hand domain. Ca(2+) is bound by residues D763, D765, D767, E769, and E774. Residues 764 to 831 (QDGDQELTEH…HSSRRRGSIS (68 aa)) are disordered. The segment covering 770–795 (LTEHEHQQMRDDLEKEREDLDLDHSS) has biased composition (basic and acidic residues). The span at 796 to 807 (LPRPMSSRSFPR) shows a compositional bias: low complexity. 4 positions are modified to phosphoserine: S801, S808, S812, and S829. The interval 803 to 822 (RSFPRSLDDSEEDDDEDSGH) is linker. Positions 810–821 (DDSEEDDDEDSG) are important for interaction with PACS1 and PACS2. Positions 833 to 872 (GVSYEEFQVLVRRVDRMEHSIGSIVSKIDAVIVKLEIMER) form a coiled coil. Residues 917–968 (ESDDAASQISHGLGTPVGLNGQPRPRSSRPSSSQSTEGMEGAGGNGSSNVHV) are disordered. The span at 938 to 951 (QPRPRSSRPSSSQS) shows a compositional bias: low complexity.

The protein belongs to the polycystin family. In terms of assembly, homotetramer. Component of the heterotetrameric polycystin channel complex with PKD1; the tetramer contains one PKD1 chain and three PKD2 chains. Isoform 1 interacts with PKD1 while isoform 3 does not. Interacts with PKD1L1; probably forms a Ca(2+) channel. Interacts with CD2AP. Interacts with HAX1. Interacts with NEK8. Part of a complex containing AKAP5, ADCY5, ADCY6 and PDE4C. Interacts (via C-terminus) with TRPV4 (via C-terminus). Interacts (via C-terminal acidic region) with PACS1 and PACS2; these interactions retain the protein in the endoplasmic reticulum and prevent trafficking to the cell membrane. Interacts with TMEM33. Form a heterotetramer with TRPC1 with a 2:2 stoichiometry; has distinct channel properties separate from PKD2 or TRPC1 homomers alone. Interacts with TMEM120A; TMEM120A inhibits PKD2 channel activity through the physical association of PKD2 with TMEM120A. Interacts (via N-terminus) with RYR2; regulates RYR2 channel activity. In terms of processing, phosphorylated. Phosphorylation is important for protein function; a mutant that lacks the N-terminal phosphorylation sites cannot complement a zebrafish pkd2-deficient mutant. PKD-mediated phosphorylation at the C-terminus regulates its function in the release of Ca(2+) stores from the endoplasmic reticulum. Phosphorylation at Ser-812 regulates PKD2 trafficking. Phosphorylation at Ser-76 is required for PKD2 trafficking to or retention at the lateral plasma membrane. Phosphorylation at Ser-801, Ser-812 and Ser-829 regulates PKD2 channel activity. N-glycosylated. The four subunits in a tetramer probably differ in the extent of glycosylation; simultaneous glycosylation of all experimentally validated sites would probably create steric hindrance. Thus, glycosylation at Asn-305 is not compatible with glycosylation at Asn-328; only one of these two residues is glycosylated at a given time. Post-translationally, sumoylated by SUMO1; sumoylation regulates PKD2 membrane recycling and is necessary for intravascular pressure-induced arterial contractility. Detected in fetal and adult kidney. Detected at the thick ascending limb of the loop of Henle, at distal tubules, including the distal convoluted tubule and cortical collecting tubules, with weak staining of the collecting duct. Detected on placenta syncytiotrophoblasts (at protein level). Strongly expressed in ovary, fetal and adult kidney, testis, and small intestine. Not detected in peripheral leukocytes.

It is found in the cell projection. The protein resides in the cilium membrane. It localises to the endoplasmic reticulum membrane. The protein localises to the cell membrane. Its subcellular location is the basolateral cell membrane. It is found in the cytoplasmic vesicle membrane. The protein resides in the golgi apparatus. It localises to the vesicle. The protein localises to the secreted. Its subcellular location is the extracellular exosome. The enzyme catalyses K(+)(in) = K(+)(out). The catalysed reaction is Na(+)(in) = Na(+)(out). It carries out the reaction Ca(2+)(in) = Ca(2+)(out). Channel activity is regulated by phosphorylation. Channel activity is regulated by intracellular Ca(2+). At the endoplasmic reticulum membrane (ER), TMEM33 enhances its channel activity. TMEM120A inhibits the channel activity of PKD2, and mediates mechanosensitivity of the PKD2-TMEM120A channel complex. PKD1/PKD2 complex on the plasma membrane is activated by PKD1 N-terminus. Functionally, forms a nonselective cation channel. Can function as a homotetrameric ion channel or can form heteromer with PKD1. Displays distinct function depending on its subcellular localization and regulation by its binding partners. In primary cilium functions as a cation channel, with a preference for monovalent cations over divalent cations that allows K(+), Na(+) and Ca(2+) influx, with low selectivity for Ca(2+). Involved in fluid-flow mechanosensation by the primary cilium in renal epithelium. In the endoplasmic reticulum, likely functions as a K(+) channel to facilitate Ca(2+) release. The heterotetrameric PKD1/PKD2 channel has higher Ca(2+) permeability than homomeric PKD2 channel and acts as a primarily Ca(2+)-permeable channel. Interacts with and acts as a regulator of a number of other channels, such as TRPV4, TRPC1, IP3R, RYR2, ultimately further affecting intracellular signaling, to modulate intracellular Ca(2+) signaling. Together with TRPV4, forms mechano- and thermosensitive channels in cilium. In cardiomyocytes, PKD2 modulates Ca(2+) release from stimulated RYR2 receptors through direct association. Also involved in left-right axis specification via its role in sensing nodal flow; forms a complex with PKD1L1 in cilia to facilitate flow detection in left-right patterning. Acts as a regulator of cilium length together with PKD1. Mediates systemic blood pressure and contributes to the myogenic response in cerebral arteries though vasoconstriction. This chain is Polycystin-2, found in Homo sapiens (Human).